We begin with the raw amino-acid sequence, 380 residues long: Queuine tRNA-ribosyltransferase (380 aa).

The active-site Proton acceptor is the aspartate 96. Substrate contacts are provided by residues 96 to 100, aspartate 150, glutamine 193, and glycine 220; that span reads DSGGF. The RNA binding stretch occupies residues 251–257; it reads GVGAPDS. Aspartate 270 (nucleophile) is an active-site residue. The tract at residues 275–279 is RNA binding; important for wobble base 34 recognition; the sequence is TRIAR. Zn(2+) contacts are provided by cysteine 308, cysteine 310, cysteine 313, and histidine 339.

Belongs to the queuine tRNA-ribosyltransferase family. In terms of assembly, homodimer. Within each dimer, one monomer is responsible for RNA recognition and catalysis, while the other monomer binds to the replacement base PreQ1. The cofactor is Zn(2+).

It carries out the reaction 7-aminomethyl-7-carbaguanine + guanosine(34) in tRNA = 7-aminomethyl-7-carbaguanosine(34) in tRNA + guanine. Its pathway is tRNA modification; tRNA-queuosine biosynthesis. In terms of biological role, catalyzes the base-exchange of a guanine (G) residue with the queuine precursor 7-aminomethyl-7-deazaguanine (PreQ1) at position 34 (anticodon wobble position) in tRNAs with GU(N) anticodons (tRNA-Asp, -Asn, -His and -Tyr). Catalysis occurs through a double-displacement mechanism. The nucleophile active site attacks the C1' of nucleotide 34 to detach the guanine base from the RNA, forming a covalent enzyme-RNA intermediate. The proton acceptor active site deprotonates the incoming PreQ1, allowing a nucleophilic attack on the C1' of the ribose to form the product. After dissociation, two additional enzymatic reactions on the tRNA convert PreQ1 to queuine (Q), resulting in the hypermodified nucleoside queuosine (7-(((4,5-cis-dihydroxy-2-cyclopenten-1-yl)amino)methyl)-7-deazaguanosine). The sequence is that of Queuine tRNA-ribosyltransferase from Streptococcus pneumoniae (strain P1031).